Consider the following 800-residue polypeptide: Phenylalanine--tRNA ligase beta subunit (800 aa).

Positions 39–154 (TKDIKNLVVG…ESQVPGTDAL (116 aa)) constitute a tRNA-binding domain. In terms of domain architecture, B5 spans 408–483 (AFITPIDITA…RIYGYDDIPS (76 aa)). The Mg(2+) site is built by Asp461, Asp467, Glu470, and Glu471. The 93-residue stretch at 708–800 (PRFPGMSRDI…ALIEQGAVIR (93 aa)) folds into the FDX-ACB domain.

The protein belongs to the phenylalanyl-tRNA synthetase beta subunit family. Type 1 subfamily. In terms of assembly, tetramer of two alpha and two beta subunits. Requires Mg(2+) as cofactor.

It is found in the cytoplasm. The enzyme catalyses tRNA(Phe) + L-phenylalanine + ATP = L-phenylalanyl-tRNA(Phe) + AMP + diphosphate + H(+). The protein is Phenylalanine--tRNA ligase beta subunit of Staphylococcus aureus (strain Mu50 / ATCC 700699).